The primary structure comprises 129 residues: MSTKVVEIKTLKVGKYIVLGGEASKITSLTTSSPGKHGAAKARLEAVGIFDNQKRSIVKPVDTKVDIPIIDKRVGQVLSIQGNNVQLMDMENYDTLDLPMPEELKDQITEGIEVDYIVALGNMKIMRTK.

Lys-36 bears the Hypusine mark.

Belongs to the eIF-5A family.

The protein resides in the cytoplasm. Its function is as follows. Functions by promoting the formation of the first peptide bond. The sequence is that of Translation initiation factor 5A (eIF5A) from Methanobrevibacter smithii (strain ATCC 35061 / DSM 861 / OCM 144 / PS).